The sequence spans 202 residues: N-(5'-phosphoribosyl)anthranilate isomerase (202 aa).

This sequence belongs to the TrpF family.

The catalysed reaction is N-(5-phospho-beta-D-ribosyl)anthranilate = 1-(2-carboxyphenylamino)-1-deoxy-D-ribulose 5-phosphate. It functions in the pathway amino-acid biosynthesis; L-tryptophan biosynthesis; L-tryptophan from chorismate: step 3/5. In Geobacter metallireducens (strain ATCC 53774 / DSM 7210 / GS-15), this protein is N-(5'-phosphoribosyl)anthranilate isomerase.